A 349-amino-acid chain; its full sequence is Isopentenyl-diphosphate delta-isomerase (349 aa).

9–10 (RK) is a substrate binding site. FMN is bound by residues 65–67 (AMT), S95, and N124. 95–97 (STH) provides a ligand contact to substrate. Residue Q154 participates in substrate binding. E155 contributes to the Mg(2+) binding site. FMN is bound by residues K186, S211, T216, 262–264 (GLR), and 283–284 (SR).

Belongs to the IPP isomerase type 2 family. Homooctamer. Dimer of tetramers. The cofactor is FMN. NADPH is required as a cofactor. Requires Mg(2+) as cofactor.

It is found in the cytoplasm. The enzyme catalyses isopentenyl diphosphate = dimethylallyl diphosphate. Functionally, involved in the biosynthesis of isoprenoids. Catalyzes the 1,3-allylic rearrangement of the homoallylic substrate isopentenyl (IPP) to its allylic isomer, dimethylallyl diphosphate (DMAPP). The sequence is that of Isopentenyl-diphosphate delta-isomerase from Staphylococcus aureus.